The chain runs to 872 residues: Alanine--tRNA ligase (872 aa).

Zn(2+) is bound by residues His-567, His-571, Cys-669, and His-673.

This sequence belongs to the class-II aminoacyl-tRNA synthetase family. Zn(2+) serves as cofactor.

The protein resides in the cytoplasm. It catalyses the reaction tRNA(Ala) + L-alanine + ATP = L-alanyl-tRNA(Ala) + AMP + diphosphate. Its function is as follows. Catalyzes the attachment of alanine to tRNA(Ala) in a two-step reaction: alanine is first activated by ATP to form Ala-AMP and then transferred to the acceptor end of tRNA(Ala). Also edits incorrectly charged Ser-tRNA(Ala) and Gly-tRNA(Ala) via its editing domain. The chain is Alanine--tRNA ligase from Streptococcus pneumoniae serotype 4 (strain ATCC BAA-334 / TIGR4).